The chain runs to 279 residues: Urease accessory protein UreD (279 aa).

The protein belongs to the UreD family. As to quaternary structure, ureD, UreF and UreG form a complex that acts as a GTP-hydrolysis-dependent molecular chaperone, activating the urease apoprotein by helping to assemble the nickel containing metallocenter of UreC. The UreE protein probably delivers the nickel.

Its subcellular location is the cytoplasm. Its function is as follows. Required for maturation of urease via the functional incorporation of the urease nickel metallocenter. In Streptococcus thermophilus (strain ATCC BAA-250 / LMG 18311), this protein is Urease accessory protein UreD.